The chain runs to 207 residues: Non-structural protein 5 (207 aa).

One can recognise a DRBM domain in the interval 2-69 (DPVSVVHSFA…CVLISNDLKE (68 aa)).

The chain is Non-structural protein 5 (Segment-12) from Banna virus (BAV).